Reading from the N-terminus, the 136-residue chain is Small ribosomal subunit protein uS9 (136 aa).

A disordered region spans residues 97–136 (SPDNRKPLKTEGHLSRDPRAKERRKYGLKKARKAPQFSKR). The segment covering 98–116 (PDNRKPLKTEGHLSRDPRA) has biased composition (basic and acidic residues). Residues 117-136 (KERRKYGLKKARKAPQFSKR) show a composition bias toward basic residues.

Belongs to the universal ribosomal protein uS9 family.

This chain is Small ribosomal subunit protein uS9, found in Prochlorococcus marinus (strain MIT 9301).